The primary structure comprises 114 residues: Large ribosomal subunit protein uL22 (114 aa).

Belongs to the universal ribosomal protein uL22 family. Part of the 50S ribosomal subunit.

Functionally, this protein binds specifically to 23S rRNA; its binding is stimulated by other ribosomal proteins, e.g. L4, L17, and L20. It is important during the early stages of 50S assembly. It makes multiple contacts with different domains of the 23S rRNA in the assembled 50S subunit and ribosome. In terms of biological role, the globular domain of the protein is located near the polypeptide exit tunnel on the outside of the subunit, while an extended beta-hairpin is found that lines the wall of the exit tunnel in the center of the 70S ribosome. The polypeptide is Large ribosomal subunit protein uL22 (Desulfosudis oleivorans (strain DSM 6200 / JCM 39069 / Hxd3) (Desulfococcus oleovorans)).